The following is a 100-amino-acid chain: Urease subunit gamma (100 aa).

It belongs to the urease gamma subunit family. As to quaternary structure, heterotrimer of UreA (gamma), UreB (beta) and UreC (alpha) subunits. Three heterotrimers associate to form the active enzyme.

The protein resides in the cytoplasm. The catalysed reaction is urea + 2 H2O + H(+) = hydrogencarbonate + 2 NH4(+). Its pathway is nitrogen metabolism; urea degradation; CO(2) and NH(3) from urea (urease route): step 1/1. In Mycobacterium ulcerans (strain Agy99), this protein is Urease subunit gamma.